We begin with the raw amino-acid sequence, 862 residues long: Protein JOKA2 (862 aa).

The region spanning 6–90 is the PB1 domain; that stretch reads SIVIKVKYEE…NPLRISARLN (85 aa). A compositionally biased stretch (low complexity) spans 92 to 106; it reads GERSGRASARSSGNS. Disordered stretches follow at residues 92-117, 194-234, and 295-345; these read GERS…VQPP, KGNT…ASNE, and VRNS…DSSG. Over residues 325–345 the composition is skewed to polar residues; that stretch reads SASSSKVKQCNWDSPNADSSG. A ZZ-type; degenerate zinc finger spans residues 442–492; sequence HKGVRCDGCGVHPITGPRFISKVKENYDLCSICFAEMGNDADYIRMDRPLT. Zn(2+) contacts are provided by Cys-447, Cys-450, Cys-471, and Cys-474. The 50-residue stretch at 811 to 860 folds into the UBA domain; that stretch reads SVDDLCGVAEWDPILEELKEMGFCDKEMNKKLLKKNNGSIKRVVMDLIAG. Positions 817 to 824 match the ATG8 interacting motif (AIM) motif; that stretch reads GVAEWDPI.

Interacts (via C-terminal AIM motif) with ATG8CL.

The protein localises to the vacuole. It is found in the cytoplasmic vesicle. It localises to the autophagosome. Its function is as follows. Autophagic substrate that functions as a host autophagy cargo receptor. Requires ATG8 protein expression to be recognized as an autophagic substrate. Activates ATG8CL-mediated selective autophagy, and contributes to defense against the fungal pathogen Phytophtora infestans. The polypeptide is Protein JOKA2 (Solanum tuberosum (Potato)).